The sequence spans 1244 residues: Ras-specific guanine nucleotide-releasing factor 2 (1244 aa).

The PH 1 domain occupies 22-129 (EGTKRGYLSK…WVEAIQQASY (108 aa)). Residues 147-189 (VQIVETEKVAANQLRTQLEDQDTEIERLKAEIIALNKTKERMR) adopt a coiled-coil conformation. The IQ domain maps to 201 to 230 (DIKKIKKVQSFMRGWLCRRKWKIIVQDYIC). The DH domain occupies 239-425 (KRNQIVFNMV…EELSRVMHDE (187 aa)). A PH 2 domain is found at 466–584 (PSVERGKLSK…WTSDISQCID (119 aa)). Residues 631 to 745 (KVPQIRYASV…PVRTRKLSLN (115 aa)) enclose the N-terminal Ras-GEF domain. Disordered regions lie at residues 704 to 743 (NRSG…RKLS), 759 to 814 (TTSS…NAEV), and 843 to 879 (PESP…AENS). The segment covering 706–715 (SGDHVNDKSP) has biased composition (basic and acidic residues). Polar residues predominate over residues 728-743 (SISSRTSSPVRTRKLS). Composition is skewed to low complexity over residues 759-774 (TTSS…ANPT) and 781-806 (NNNN…QSPG). The Ras-GEF domain maps to 1009-1241 (SAMEIAEQIT…YDLSLKIEPR (233 aa)).

It is found in the cytoplasm. The protein localises to the cell membrane. The protein resides in the endoplasmic reticulum membrane. Functionally, functions as a calcium-regulated nucleotide exchange factor activating both Ras and rac1 through the exchange of bound GDP for GTP. May function in synaptic plasticity. This chain is Ras-specific guanine nucleotide-releasing factor 2 (rasgrf2), found in Danio rerio (Zebrafish).